The chain runs to 347 residues: Protein RecA (347 aa).

An ATP-binding site is contributed by 67–74 (GPESSGKT).

It belongs to the RecA family.

The protein resides in the cytoplasm. Its function is as follows. Can catalyze the hydrolysis of ATP in the presence of single-stranded DNA, the ATP-dependent uptake of single-stranded DNA by duplex DNA, and the ATP-dependent hybridization of homologous single-stranded DNAs. It interacts with LexA causing its activation and leading to its autocatalytic cleavage. This is Protein RecA from Helicobacter pylori (strain HPAG1).